Here is a 242-residue protein sequence, read N- to C-terminus: Floral homeotic protein AGAMOUS (242 aa).

One can recognise an MADS-box domain in the interval Arg19–Tyr73. A K-box domain is found at Ala103–Ala193.

As to expression, flower. Preferentially expressed in stamen and carpel and weakly in petal. Undetected in leaves and roots.

Its subcellular location is the nucleus. Probable transcription factor involved in regulating genes that determines stamen and carpel development in wild-type flowers. In Panax ginseng (Korean ginseng), this protein is Floral homeotic protein AGAMOUS (AG2).